We begin with the raw amino-acid sequence, 525 residues long: MTQNIHSQRVLILDFGSQYTQLIARRIREVGVFSEIRAFDMTDEEIREYNPKAIILSGGPESVTAGASPRAPEAVFELGVPVLGICYGMQTMAEQLGGRVQSSEVREFGYAQVRVAGESALFRDIKDHVDSDGGALLDVWMSHGDKVIAMPDTFSLLASTPSCPIAGMSWEEKRFYGVQFHPEVTHTLQGKRIFEHFVLEIAGCEPLWTPANIVEDAIERVREKVGSDKVLLGLSGGVDSSVVAALLHRAIGDQLTCVFVDNGLLRKQEGDQVMDMFAKNMGVKVVRADAEDLFLSKLHGINDPEQKRKIIGNTFIEVFDTEAAKLQNVKWLAQGTIYPDVIESAASKTGKAHVIKSHHNVGGLPEDMQFELVEPLRELFKDEVRKIGLELGLPYDMVYRHPFPGPGLGVRILGEVKKEYADILREADAIFIEELRNADWYHKTSQAFAVFLPVKSVGVVGDARRYEWVISLRAVETVDFMTARWAHLPYDLLEKVSNRIINEISGVSRVAYDVSSKPPATIEWE.

Residues 9–207 enclose the Glutamine amidotransferase type-1 domain; that stretch reads RVLILDFGSQ…VLEIAGCEPL (199 aa). Cys-86 functions as the Nucleophile in the catalytic mechanism. Catalysis depends on residues His-181 and Glu-183. Residues 208–400 enclose the GMPS ATP-PPase domain; sequence WTPANIVEDA…LGLPYDMVYR (193 aa). 235-241 is a binding site for ATP; that stretch reads SGGVDSS.

Homodimer.

The enzyme catalyses XMP + L-glutamine + ATP + H2O = GMP + L-glutamate + AMP + diphosphate + 2 H(+). It functions in the pathway purine metabolism; GMP biosynthesis; GMP from XMP (L-Gln route): step 1/1. Catalyzes the synthesis of GMP from XMP. The polypeptide is GMP synthase [glutamine-hydrolyzing] (Teredinibacter turnerae (strain ATCC 39867 / T7901)).